We begin with the raw amino-acid sequence, 159 residues long: Serine-protein kinase RsbW (159 aa).

Belongs to the anti-sigma-factor family.

It catalyses the reaction L-seryl-[protein] + ATP = O-phospho-L-seryl-[protein] + ADP + H(+). The catalysed reaction is L-threonyl-[protein] + ATP = O-phospho-L-threonyl-[protein] + ADP + H(+). Its function is as follows. Negative regulator of sigma-B activity. Phosphorylates and inactivates its specific antagonist protein, RsbV. Upon phosphorylation of RsbV, RsbW is released and binds to sigma-B, thereby blocking its ability to form an RNA polymerase holoenzyme (E-sigma-B). The polypeptide is Serine-protein kinase RsbW (Staphylococcus aureus (strain Newman)).